Here is a 278-residue protein sequence, read N- to C-terminus: Protein NIF3 homolog (278 aa).

This sequence belongs to the GTP cyclohydrolase I type 2/NIF3 family.

In Schizosaccharomyces pombe (strain 972 / ATCC 24843) (Fission yeast), this protein is Protein NIF3 homolog.